Here is a 24-residue protein sequence, read N- to C-terminus: Humanin-like 1 (24 aa).

This sequence belongs to the humanin family. As to expression, highly expressed in the kidney, heart muscle and testis.

Its subcellular location is the secreted. The protein localises to the cytoplasm. In terms of biological role, plays a role as a neuroprotective and antiapoptotic factor. In Homo sapiens (Human), this protein is Humanin-like 1.